Consider the following 440-residue polypeptide: Enolase (440 aa).

Gln-163 lines the (2R)-2-phosphoglycerate pocket. Glu-205 acts as the Proton donor in catalysis. The Mg(2+) site is built by Asp-242, Glu-288, and Asp-315. Positions 340, 369, 370, and 391 each coordinate (2R)-2-phosphoglycerate. Lys-340 (proton acceptor) is an active-site residue.

Belongs to the enolase family. The cofactor is Mg(2+).

The protein localises to the cytoplasm. It localises to the secreted. It is found in the cell surface. It carries out the reaction (2R)-2-phosphoglycerate = phosphoenolpyruvate + H2O. It participates in carbohydrate degradation; glycolysis; pyruvate from D-glyceraldehyde 3-phosphate: step 4/5. Its function is as follows. Catalyzes the reversible conversion of 2-phosphoglycerate (2-PG) into phosphoenolpyruvate (PEP). It is essential for the degradation of carbohydrates via glycolysis. The polypeptide is Enolase (Limosilactobacillus fermentum (strain NBRC 3956 / LMG 18251) (Lactobacillus fermentum)).